The sequence spans 953 residues: Catenin alpha-2 (953 aa).

Threonine 632 is modified (phosphothreonine). Phosphoserine is present on residues serine 640, serine 651, and serine 901. Residues 912–927 (EKKPLVKREKPEEFQT) show a composition bias toward basic and acidic residues. Residues 912–939 (EKKPLVKREKPEEFQTRVRRGSQKKHIS) form a disordered region. The segment covering 928–938 (RVRRGSQKKHI) has biased composition (basic residues). Serine 939 carries the phosphoserine modification.

The protein belongs to the vinculin/alpha-catenin family. Interacts with CDH1 and CDH2. Interacts with ZNF639; recruits CTNNA2 to the nucleus. Interacts with F-actin. Expressed in neural tissues, with strongest expression in fetal and adult brain. Expressed in the developing cortical plate and marginal zone of 20-week-old human fetal brain.

The protein resides in the cell membrane. It is found in the cytoplasm. Its subcellular location is the cytoskeleton. It localises to the cell junction. The protein localises to the adherens junction. The protein resides in the cell projection. It is found in the axon. Its subcellular location is the nucleus. Its function is as follows. May function as a linker between cadherin adhesion receptors and the cytoskeleton to regulate cell-cell adhesion and differentiation in the nervous system. Required for proper regulation of cortical neuronal migration and neurite growth. It acts as a negative regulator of Arp2/3 complex activity and Arp2/3-mediated actin polymerization. It thereby suppresses excessive actin branching which would impair neurite growth and stability. Regulates morphological plasticity of synapses and cerebellar and hippocampal lamination during development. Functions in the control of startle modulation. The sequence is that of Catenin alpha-2 (CTNNA2) from Homo sapiens (Human).